A 158-amino-acid polypeptide reads, in one-letter code: MQRYPMTPQGHAALEAELKQLKSIDRPRITASIAEAREHGDLKENAEYHAAREQQGFCEARIRDIEAKLGGAQVIDPTTLPKDGRVIFGVSVVIENMDTEEEKQYKIVGDDEADFKAGKISVNSPIARGLIGKSEGDEARIETPKGVVEYEIMKVIYD.

The protein belongs to the GreA/GreB family.

In terms of biological role, necessary for efficient RNA polymerase transcription elongation past template-encoded arresting sites. The arresting sites in DNA have the property of trapping a certain fraction of elongating RNA polymerases that pass through, resulting in locked ternary complexes. Cleavage of the nascent transcript by cleavage factors such as GreA or GreB allows the resumption of elongation from the new 3'terminus. GreA releases sequences of 2 to 3 nucleotides. In Psychrobacter cryohalolentis (strain ATCC BAA-1226 / DSM 17306 / VKM B-2378 / K5), this protein is Transcription elongation factor GreA.